Consider the following 62-residue polypeptide: Large ribosomal subunit protein bL28 (62 aa).

Belongs to the bacterial ribosomal protein bL28 family.

This is Large ribosomal subunit protein bL28 from Streptococcus agalactiae serotype Ia (strain ATCC 27591 / A909 / CDC SS700).